We begin with the raw amino-acid sequence, 422 residues long: Serine hydroxymethyltransferase (422 aa).

(6S)-5,6,7,8-tetrahydrofolate is bound at residue 121–123; the sequence is GHI. At Lys-227 the chain carries N6-(pyridoxal phosphate)lysine. (6S)-5,6,7,8-tetrahydrofolate is bound at residue Glu-245.

It belongs to the SHMT family. Homodimer. Requires pyridoxal 5'-phosphate as cofactor.

It localises to the cytoplasm. It carries out the reaction 5,10-methylenetetrahydromethanopterin + glycine + H2O = 5,6,7,8-tetrahydromethanopterin + L-serine. It participates in amino-acid biosynthesis; glycine biosynthesis; glycine from L-serine: step 1/1. Its function is as follows. Catalyzes the reversible interconversion of serine and glycine with tetrahydromethanopterin (H4MPT) serving as the one-carbon carrier. Also exhibits a pteridine-independent aldolase activity toward beta-hydroxyamino acids, producing glycine and aldehydes, via a retro-aldol mechanism. In Methanobrevibacter smithii (strain ATCC 35061 / DSM 861 / OCM 144 / PS), this protein is Serine hydroxymethyltransferase.